The sequence spans 332 residues: Ornithine carbamoyltransferase 1, catabolic (332 aa).

Residues S56–T59, Q83, R107, and H134–Q137 each bind carbamoyl phosphate. L-ornithine is bound by residues N167, D231, and S235–M236. Residues C273–L274 and R318 contribute to the carbamoyl phosphate site.

Belongs to the aspartate/ornithine carbamoyltransferase superfamily. OTCase family.

The protein localises to the cytoplasm. The enzyme catalyses carbamoyl phosphate + L-ornithine = L-citrulline + phosphate + H(+). It participates in amino-acid degradation; L-arginine degradation via ADI pathway; carbamoyl phosphate from L-arginine: step 2/2. In terms of biological role, reversibly catalyzes the transfer of the carbamoyl group from carbamoyl phosphate (CP) to the N(epsilon) atom of ornithine (ORN) to produce L-citrulline. In Staphylococcus epidermidis (strain ATCC 12228 / FDA PCI 1200), this protein is Ornithine carbamoyltransferase 1, catabolic (arcB1).